The sequence spans 172 residues: 3-phenylpropionate/cinnamic acid dioxygenase subunit beta (172 aa).

The protein belongs to the bacterial ring-hydroxylating dioxygenase beta subunit family. This dioxygenase system consists of four proteins: the two subunits of the hydroxylase component (HcaE and HcaF), a ferredoxin (HcaC) and a ferredoxin reductase (HcaD).

The enzyme catalyses 3-phenylpropanoate + NADH + O2 + H(+) = 3-(cis-5,6-dihydroxycyclohexa-1,3-dien-1-yl)propanoate + NAD(+). It carries out the reaction (E)-cinnamate + NADH + O2 + H(+) = (2E)-3-(cis-5,6-dihydroxycyclohexa-1,3-dien-1-yl)prop-2-enoate + NAD(+). Its pathway is aromatic compound metabolism; 3-phenylpropanoate degradation. In terms of biological role, part of the multicomponent 3-phenylpropionate dioxygenase. Converts 3-phenylpropionic acid (PP) and cinnamic acid (CI) into 3-phenylpropionate-dihydrodiol (PP-dihydrodiol) and cinnamic acid-dihydrodiol (CI-dihydrodiol), respectively. This chain is 3-phenylpropionate/cinnamic acid dioxygenase subunit beta, found in Shigella flexneri serotype 5b (strain 8401).